The sequence spans 544 residues: Cytochrome P450 monooxygenase cle2 (544 aa).

Residues 19–39 form a helical membrane-spanning segment; it reads LGLLIGLSLILSITWTAYTIL. Positions 273 to 305 are disordered; it reads RTQQVEQSIEKNTKNEKKEDEDEDQNEDEETPG. The span at 280-290 shows a compositional bias: basic and acidic residues; the sequence is SIEKNTKNEKK. Residues 291 to 304 show a composition bias toward acidic residues; it reads EDEDEDQNEDEETP. Cysteine 478 contributes to the heme binding site.

Belongs to the cytochrome P450 family. Heme is required as a cofactor.

It is found in the membrane. It functions in the pathway secondary metabolite biosynthesis; terpenoid biosynthesis. Cytochrome P450 monooxygenase; part of the cluster A that mediates the biosynthesis of chevalone E and its oxidized derivatives that possess a unique five-membered lactone ring and can synergistically enhance the cytotoxicity of doxorubicin (DOX) in breast cancer cells. Within the pathway, cle2 is involved in hydroxylation of the chavalone E scaffold at position C-20 and contributes with cle4 to the production of seven oxidation derivatives. The molecular scaffold is commonly biosynthesized by a series of enzymes including the non-reducing polyketide synthase (NR-PKS) cle1 that produces the alpha-pyrone triacetic acid lactone (TAL); The membrane-bound prenyltransferase cle5 that accepts TAL as its substrate to perform a C-3 geranylgeranylation reaction, in which the pathway-dedicated GGPS cle6 is required to provide GGPP, the other substrate of cle5; the FAD-dependent monooxygenase Cle3 that forms an (S)-epoxide ring at the terminal olefin of the geranylgeranyl group; and the terpene cyclase Cle7 that catalyzes the cyclization of the prenyl group that yields the pentacyclic pathway intermediate chevalone E. Chevalone E can derivatize into seven new oxidized analogs by the cytochrome P450 monooxygenases cle2 (acting at C-20) and cle4 (acting at C-11 and C-12). The sequence is that of Cytochrome P450 monooxygenase cle2 from Aspergillus versicolor.